Consider the following 387-residue polypeptide: Putative glutamate--cysteine ligase 2 (387 aa).

It belongs to the glutamate--cysteine ligase type 2 family. YbdK subfamily.

The catalysed reaction is L-cysteine + L-glutamate + ATP = gamma-L-glutamyl-L-cysteine + ADP + phosphate + H(+). ATP-dependent carboxylate-amine ligase which exhibits weak glutamate--cysteine ligase activity. The protein is Putative glutamate--cysteine ligase 2 of Pseudomonas fluorescens (strain ATCC BAA-477 / NRRL B-23932 / Pf-5).